A 245-amino-acid polypeptide reads, in one-letter code: Enolase-phosphatase E1 (245 aa).

Mg(2+)-binding residues include Asp-14 and Glu-16. Residues 141–142 and Lys-175 each bind substrate; that span reads SS. Position 200 (Asp-200) interacts with Mg(2+).

This sequence belongs to the HAD-like hydrolase superfamily. MasA/MtnC family. As to quaternary structure, monomer. Mg(2+) is required as a cofactor.

It is found in the cytoplasm. The protein resides in the nucleus. It catalyses the reaction 5-methylsulfanyl-2,3-dioxopentyl phosphate + H2O = 1,2-dihydroxy-5-(methylsulfanyl)pent-1-en-3-one + phosphate. It participates in amino-acid biosynthesis; L-methionine biosynthesis via salvage pathway; L-methionine from S-methyl-5-thio-alpha-D-ribose 1-phosphate: step 3/6. The protein operates within amino-acid biosynthesis; L-methionine biosynthesis via salvage pathway; L-methionine from S-methyl-5-thio-alpha-D-ribose 1-phosphate: step 4/6. Its function is as follows. Bifunctional enzyme that catalyzes the enolization of 2,3-diketo-5-methylthiopentyl-1-phosphate (DK-MTP-1-P) into the intermediate 2-hydroxy-3-keto-5-methylthiopentenyl-1-phosphate (HK-MTPenyl-1-P), which is then dephosphorylated to form the acireductone 1,2-dihydroxy-3-keto-5-methylthiopentene (DHK-MTPene). The chain is Enolase-phosphatase E1 from Drosophila grimshawi (Hawaiian fruit fly).